The primary structure comprises 551 residues: ATP synthase subunit alpha (551 aa).

174–181 is an ATP binding site; the sequence is GDRQTGKT.

Belongs to the ATPase alpha/beta chains family. As to quaternary structure, F-type ATPases have 2 components, CF(1) - the catalytic core - and CF(0) - the membrane proton channel. CF(1) has five subunits: alpha(3), beta(3), gamma(1), delta(1), epsilon(1). CF(0) has three main subunits: a(1), b(2) and c(9-12). The alpha and beta chains form an alternating ring which encloses part of the gamma chain. CF(1) is attached to CF(0) by a central stalk formed by the gamma and epsilon chains, while a peripheral stalk is formed by the delta and b chains.

Its subcellular location is the cell inner membrane. It catalyses the reaction ATP + H2O + 4 H(+)(in) = ADP + phosphate + 5 H(+)(out). Functionally, produces ATP from ADP in the presence of a proton gradient across the membrane. The alpha chain is a regulatory subunit. The sequence is that of ATP synthase subunit alpha from Salinibacter ruber (strain DSM 13855 / M31).